The chain runs to 122 residues: Large ribosomal subunit protein uL14 (122 aa).

It belongs to the universal ribosomal protein uL14 family. In terms of assembly, part of the 50S ribosomal subunit. Forms a cluster with proteins L3 and L19. In the 70S ribosome, L14 and L19 interact and together make contacts with the 16S rRNA in bridges B5 and B8.

In terms of biological role, binds to 23S rRNA. Forms part of two intersubunit bridges in the 70S ribosome. This Borrelia turicatae (strain 91E135) protein is Large ribosomal subunit protein uL14.